The sequence spans 352 residues: Phosphoribosylformylglycinamidine cyclo-ligase (352 aa).

The protein belongs to the AIR synthase family.

It localises to the cytoplasm. The catalysed reaction is 2-formamido-N(1)-(5-O-phospho-beta-D-ribosyl)acetamidine + ATP = 5-amino-1-(5-phospho-beta-D-ribosyl)imidazole + ADP + phosphate + H(+). Its pathway is purine metabolism; IMP biosynthesis via de novo pathway; 5-amino-1-(5-phospho-D-ribosyl)imidazole from N(2)-formyl-N(1)-(5-phospho-D-ribosyl)glycinamide: step 2/2. This is Phosphoribosylformylglycinamidine cyclo-ligase from Pseudomonas fluorescens (strain ATCC BAA-477 / NRRL B-23932 / Pf-5).